The chain runs to 147 residues: Large ribosomal subunit protein uL11 (147 aa).

Belongs to the universal ribosomal protein uL11 family. In terms of assembly, part of the ribosomal stalk of the 50S ribosomal subunit. Interacts with L10 and the large rRNA to form the base of the stalk. L10 forms an elongated spine to which L12 dimers bind in a sequential fashion forming a multimeric L10(L12)X complex. One or more lysine residues are methylated.

Functionally, forms part of the ribosomal stalk which helps the ribosome interact with GTP-bound translation factors. The sequence is that of Large ribosomal subunit protein uL11 from Bacteroides fragilis (strain ATCC 25285 / DSM 2151 / CCUG 4856 / JCM 11019 / LMG 10263 / NCTC 9343 / Onslow / VPI 2553 / EN-2).